The following is a 147-amino-acid chain: Large ribosomal subunit protein bL9 (147 aa).

The protein belongs to the bacterial ribosomal protein bL9 family.

Its function is as follows. Binds to the 23S rRNA. This is Large ribosomal subunit protein bL9 from Bdellovibrio bacteriovorus (strain ATCC 15356 / DSM 50701 / NCIMB 9529 / HD100).